Consider the following 318-residue polypeptide: 2-keto-3-deoxygluconate permease (318 aa).

Transmembrane regions (helical) follow at residues 10 to 30, 42 to 62, 82 to 102, 109 to 129, 139 to 159, 163 to 183, 194 to 214, 224 to 244, 257 to 277, and 289 to 309; these read LPGG…TLWP, GLIS…GATI, IAMA…GGVP, LSVL…YAAL, AGAV…LILG, LASF…LGFA, FFAQ…GNTL, ASGV…LLLA, VAAS…AGMA, and ALVA…TALY.

This sequence belongs to the KdgT transporter family.

The protein resides in the cell inner membrane. It carries out the reaction 2-dehydro-3-deoxy-D-gluconate(in) + H(+)(in) = 2-dehydro-3-deoxy-D-gluconate(out) + H(+)(out). Functionally, catalyzes the proton-dependent uptake of 2-keto-3-deoxygluconate (KDG) into the cell. The chain is 2-keto-3-deoxygluconate permease from Xanthomonas euvesicatoria pv. vesicatoria (strain 85-10) (Xanthomonas campestris pv. vesicatoria).